The sequence spans 312 residues: Ribosomal RNA small subunit methyltransferase H (312 aa).

Residues 32–34 (AGH), Asp52, Phe79, Asp100, and Gln107 each bind S-adenosyl-L-methionine.

It belongs to the methyltransferase superfamily. RsmH family.

It is found in the cytoplasm. It catalyses the reaction cytidine(1402) in 16S rRNA + S-adenosyl-L-methionine = N(4)-methylcytidine(1402) in 16S rRNA + S-adenosyl-L-homocysteine + H(+). Functionally, specifically methylates the N4 position of cytidine in position 1402 (C1402) of 16S rRNA. The polypeptide is Ribosomal RNA small subunit methyltransferase H (Listeria monocytogenes serotype 4b (strain CLIP80459)).